The following is a 1099-amino-acid chain: Carbamoyl phosphate synthase large chain (1099 aa).

Residues 1–402 are carboxyphosphate synthetic domain; that stretch reads MPKREDIKRI…ALGKALRSLE (402 aa). The ATP site is built by Arg129, Arg169, Gly175, Gly176, Glu208, Val210, Glu215, Gly241, Ile242, His243, Gln285, and Glu299. An ATP-grasp 1 domain is found at 133–328; the sequence is KETMEKAGLE…IAKVAALLAV (196 aa). Mg(2+)-binding residues include Gln285, Glu299, and Asn301. Positions 285, 299, and 301 each coordinate Mn(2+). The interval 403-541 is oligomerization domain; it reads LDAAPKLDLE…STYNGVENEA (139 aa). A carbamoyl phosphate synthetic domain region spans residues 542–944; it reads VPSDREKIMI…AFAKAQIAAG (403 aa). The ATP-grasp 2 domain maps to 666-857; sequence AKLLKQIGLK…VARIAAKIMV (192 aa). Arg702, Lys741, Leu743, Glu748, Gly773, Val774, His775, Ser776, Gln816, and Glu828 together coordinate ATP. Mg(2+) is bound by residues Gln816, Glu828, and Asn830. Residues Gln816, Glu828, and Asn830 each coordinate Mn(2+). In terms of domain architecture, MGS-like spans 945-1099; that stretch reads NPLPTTGAIL…VRRLTDTWKM (155 aa). The tract at residues 945–1099 is allosteric domain; sequence NPLPTTGAIL…VRRLTDTWKM (155 aa).

It belongs to the CarB family. As to quaternary structure, composed of two chains; the small (or glutamine) chain promotes the hydrolysis of glutamine to ammonia, which is used by the large (or ammonia) chain to synthesize carbamoyl phosphate. Tetramer of heterodimers (alpha,beta)4. It depends on Mg(2+) as a cofactor. Mn(2+) is required as a cofactor.

It catalyses the reaction hydrogencarbonate + L-glutamine + 2 ATP + H2O = carbamoyl phosphate + L-glutamate + 2 ADP + phosphate + 2 H(+). It carries out the reaction hydrogencarbonate + NH4(+) + 2 ATP = carbamoyl phosphate + 2 ADP + phosphate + 2 H(+). It functions in the pathway amino-acid biosynthesis; L-arginine biosynthesis; carbamoyl phosphate from bicarbonate: step 1/1. Its pathway is pyrimidine metabolism; UMP biosynthesis via de novo pathway; (S)-dihydroorotate from bicarbonate: step 1/3. Functionally, large subunit of the glutamine-dependent carbamoyl phosphate synthetase (CPSase). CPSase catalyzes the formation of carbamoyl phosphate from the ammonia moiety of glutamine, carbonate, and phosphate donated by ATP, constituting the first step of 2 biosynthetic pathways, one leading to arginine and/or urea and the other to pyrimidine nucleotides. The large subunit (synthetase) binds the substrates ammonia (free or transferred from glutamine from the small subunit), hydrogencarbonate and ATP and carries out an ATP-coupled ligase reaction, activating hydrogencarbonate by forming carboxy phosphate which reacts with ammonia to form carbamoyl phosphate. The protein is Carbamoyl phosphate synthase large chain of Thermotoga petrophila (strain ATCC BAA-488 / DSM 13995 / JCM 10881 / RKU-1).